Consider the following 208-residue polypeptide: Uracil phosphoribosyltransferase (208 aa).

5-phospho-alpha-D-ribose 1-diphosphate is bound by residues Arg-78, Arg-103, and 130–138 (DPMFATGGT). Uracil is bound by residues Ile-193 and 198 to 200 (GDA). Residue Asp-199 coordinates 5-phospho-alpha-D-ribose 1-diphosphate.

This sequence belongs to the UPRTase family. Requires Mg(2+) as cofactor.

It catalyses the reaction UMP + diphosphate = 5-phospho-alpha-D-ribose 1-diphosphate + uracil. It participates in pyrimidine metabolism; UMP biosynthesis via salvage pathway; UMP from uracil: step 1/1. With respect to regulation, allosterically activated by GTP. Functionally, catalyzes the conversion of uracil and 5-phospho-alpha-D-ribose 1-diphosphate (PRPP) to UMP and diphosphate. The polypeptide is Uracil phosphoribosyltransferase (Campylobacter jejuni (strain RM1221)).